The primary structure comprises 222 residues: Cytidylate kinase (222 aa).

12-20 (GPSGAGKGT) serves as a coordination point for ATP.

This sequence belongs to the cytidylate kinase family. Type 1 subfamily.

Its subcellular location is the cytoplasm. The catalysed reaction is CMP + ATP = CDP + ADP. The enzyme catalyses dCMP + ATP = dCDP + ADP. This Methylococcus capsulatus (strain ATCC 33009 / NCIMB 11132 / Bath) protein is Cytidylate kinase.